The following is a 264-amino-acid chain: Endoglucanase S (264 aa).

An N-terminal signal peptide occupies residues 1-32; sequence MQTVNTQPHRIFRVLLPAVFSSLLLSSLTVSA.

Belongs to the glycosyl hydrolase 12 (cellulase H) family.

The enzyme catalyses Endohydrolysis of (1-&gt;4)-beta-D-glucosidic linkages in cellulose, lichenin and cereal beta-D-glucans.. This chain is Endoglucanase S (celS), found in Pectobacterium parmentieri.